A 161-amino-acid chain; its full sequence is Regulator of ribonuclease activity A (161 aa).

The protein belongs to the RraA family. In terms of assembly, homotrimer. Binds to both RNA-binding sites in the C-terminal region of Rne and to RhlB.

It localises to the cytoplasm. Globally modulates RNA abundance by binding to RNase E (Rne) and regulating its endonucleolytic activity. Can modulate Rne action in a substrate-dependent manner by altering the composition of the degradosome. Modulates RNA-binding and helicase activities of the degradosome. In Pectobacterium atrosepticum (strain SCRI 1043 / ATCC BAA-672) (Erwinia carotovora subsp. atroseptica), this protein is Regulator of ribonuclease activity A.